A 431-amino-acid polypeptide reads, in one-letter code: Adenylosuccinate synthetase (431 aa).

GTP contacts are provided by residues G12–K18 and G40–T42. Catalysis depends on D13, which acts as the Proton acceptor. Residues D13 and G40 each coordinate Mg(2+). IMP is bound by residues D13–K16, N38–H41, T130, R144, Q224, T239, and R303. H41 functions as the Proton donor in the catalytic mechanism. Position 299 to 305 (S299 to R305) interacts with substrate. GTP-binding positions include R305, K331 to D333, and S413 to G415.

This sequence belongs to the adenylosuccinate synthetase family. As to quaternary structure, homodimer. Mg(2+) is required as a cofactor.

It is found in the cytoplasm. The enzyme catalyses IMP + L-aspartate + GTP = N(6)-(1,2-dicarboxyethyl)-AMP + GDP + phosphate + 2 H(+). It participates in purine metabolism; AMP biosynthesis via de novo pathway; AMP from IMP: step 1/2. Its function is as follows. Plays an important role in the de novo pathway of purine nucleotide biosynthesis. Catalyzes the first committed step in the biosynthesis of AMP from IMP. This chain is Adenylosuccinate synthetase, found in Cytophaga hutchinsonii (strain ATCC 33406 / DSM 1761 / CIP 103989 / NBRC 15051 / NCIMB 9469 / D465).